Consider the following 156-residue polypeptide: MPRRRVVAAREILPDPKFSSQTIAKFMNHVMQDGKKSVAEGIVYGALERVQEKNKVDPVEFFEATLEKVRPMVEVKARRVGGATYQVPMEVRPSRRTALAMRWLVDAAAKRSEKTMALRLAGELLDAAEGKGAAIKKREDVHRMAEANKAFSHYRF.

It belongs to the universal ribosomal protein uS7 family. Part of the 30S ribosomal subunit. Contacts proteins S9 and S11.

One of the primary rRNA binding proteins, it binds directly to 16S rRNA where it nucleates assembly of the head domain of the 30S subunit. Is located at the subunit interface close to the decoding center, probably blocks exit of the E-site tRNA. The chain is Small ribosomal subunit protein uS7 from Acinetobacter baylyi (strain ATCC 33305 / BD413 / ADP1).